Here is a 101-residue protein sequence, read N- to C-terminus: uncharacterized protein (101 aa).

The helical transmembrane segment at 72 to 94 threads the bilayer; it reads ILCPSFLNYSFINIYCFGPYTMV.

It is found in the membrane. This is an uncharacterized protein from Schizosaccharomyces pombe (strain 972 / ATCC 24843) (Fission yeast).